A 185-amino-acid polypeptide reads, in one-letter code: Elongation factor P (185 aa).

This sequence belongs to the elongation factor P family.

Its subcellular location is the cytoplasm. It participates in protein biosynthesis; polypeptide chain elongation. Functionally, involved in peptide bond synthesis. Stimulates efficient translation and peptide-bond synthesis on native or reconstituted 70S ribosomes in vitro. Probably functions indirectly by altering the affinity of the ribosome for aminoacyl-tRNA, thus increasing their reactivity as acceptors for peptidyl transferase. The protein is Elongation factor P of Streptococcus pyogenes serotype M28 (strain MGAS6180).